Here is a 228-residue protein sequence, read N- to C-terminus: Cytochrome c oxidase subunit 2 (228 aa).

At 1–14 (MANHSQLGFQDASS) the chain is on the mitochondrial intermembrane side. A helical transmembrane segment spans residues 15–45 (PIMEELVEFHDHALIVALAICSLVLYLLAHM). At 46-58 (LMEKLSSNAVDAQ) the chain is on the mitochondrial matrix side. The helical transmembrane segment at 59–86 (EVELIWTILPAIVLVLLALPSLQILYMM) threads the bilayer. Topologically, residues 87–228 (DEIDEPDLTL…ETWSSLLSAS (142 aa)) are mitochondrial intermembrane. Positions 160, 195, 197, 199, 203, and 206 each coordinate Cu cation. Position 197 (Glu-197) interacts with Mg(2+).

Belongs to the cytochrome c oxidase subunit 2 family. As to quaternary structure, component of the cytochrome c oxidase (complex IV, CIV), a multisubunit enzyme composed of 14 subunits. The complex is composed of a catalytic core of 3 subunits MT-CO1, MT-CO2 and MT-CO3, encoded in the mitochondrial DNA, and 11 supernumerary subunits COX4I, COX5A, COX5B, COX6A, COX6B, COX6C, COX7A, COX7B, COX7C, COX8 and NDUFA4, which are encoded in the nuclear genome. The complex exists as a monomer or a dimer and forms supercomplexes (SCs) in the inner mitochondrial membrane with NADH-ubiquinone oxidoreductase (complex I, CI) and ubiquinol-cytochrome c oxidoreductase (cytochrome b-c1 complex, complex III, CIII), resulting in different assemblies (supercomplex SCI(1)III(2)IV(1) and megacomplex MCI(2)III(2)IV(2)). Found in a complex with TMEM177, COA6, COX18, COX20, SCO1 and SCO2. Interacts with TMEM177 in a COX20-dependent manner. Interacts with COX20. Interacts with COX16. The cofactor is Cu cation.

Its subcellular location is the mitochondrion inner membrane. The catalysed reaction is 4 Fe(II)-[cytochrome c] + O2 + 8 H(+)(in) = 4 Fe(III)-[cytochrome c] + 2 H2O + 4 H(+)(out). Component of the cytochrome c oxidase, the last enzyme in the mitochondrial electron transport chain which drives oxidative phosphorylation. The respiratory chain contains 3 multisubunit complexes succinate dehydrogenase (complex II, CII), ubiquinol-cytochrome c oxidoreductase (cytochrome b-c1 complex, complex III, CIII) and cytochrome c oxidase (complex IV, CIV), that cooperate to transfer electrons derived from NADH and succinate to molecular oxygen, creating an electrochemical gradient over the inner membrane that drives transmembrane transport and the ATP synthase. Cytochrome c oxidase is the component of the respiratory chain that catalyzes the reduction of oxygen to water. Electrons originating from reduced cytochrome c in the intermembrane space (IMS) are transferred via the dinuclear copper A center (CU(A)) of subunit 2 and heme A of subunit 1 to the active site in subunit 1, a binuclear center (BNC) formed by heme A3 and copper B (CU(B)). The BNC reduces molecular oxygen to 2 water molecules using 4 electrons from cytochrome c in the IMS and 4 protons from the mitochondrial matrix. The protein is Cytochrome c oxidase subunit 2 (MT-CO2) of Cairina moschata (Muscovy duck).